The following is a 105-amino-acid chain: Large ribosomal subunit protein bL21 (105 aa).

The protein belongs to the bacterial ribosomal protein bL21 family. Part of the 50S ribosomal subunit. Contacts protein L20.

Functionally, this protein binds to 23S rRNA in the presence of protein L20. This chain is Large ribosomal subunit protein bL21, found in Rickettsia prowazekii (strain Madrid E).